The sequence spans 307 residues: Metapyrocatechase (307 aa).

VOC domains follow at residues 7-122 (RPGH…LYAD) and 150-269 (RFDH…VFCG). H153, H214, and E265 together coordinate Fe cation.

This sequence belongs to the extradiol ring-cleavage dioxygenase family. Homotetramer. It depends on Fe(2+) as a cofactor.

It carries out the reaction catechol + O2 = (2Z,4E)-2-hydroxy-6-oxohexa-2,4-dienoate + H(+). The protein operates within aromatic compound metabolism; benzoate degradation via hydroxylation. This is Metapyrocatechase (dmpB) from Pseudomonas sp. (strain CF600).